We begin with the raw amino-acid sequence, 203 residues long: Probable host range protein 2-3 (203 aa).

The segment at 182-203 is disordered; the sequence is LEEEDEEKIADTGNDNQKDAED.

This sequence belongs to the poxviridae C7 protein family.

Plays a role for multiplication of the virus in different cell types. The polypeptide is Probable host range protein 2-3 (Myxoma virus (strain Lausanne) (MYXV)).